A 223-amino-acid polypeptide reads, in one-letter code: Glutathione S-transferase 4 (223 aa).

Alanine 2 bears the Blocked amino end (Ala) mark. Residues 4 to 85 (PAVKVYGWAI…HVLRKHKPEL (82 aa)) enclose the GST N-terminal domain. Glutathione contacts are provided by residues serine 14, 43–44 (HR), 56–57 (KV), and 69–70 (ES). Positions 90 to 223 (RLEQTAMVDV…VGAGAPKEQE (134 aa)) constitute a GST C-terminal domain.

This sequence belongs to the GST superfamily. Phi family. As to quaternary structure, homodimer or heterodimer of GST-I and GST-IV (=GST-II). As to expression, seedling roots.

The catalysed reaction is RX + glutathione = an S-substituted glutathione + a halide anion + H(+). Functionally, conjugation of reduced glutathione to a wide number of exogenous and endogenous hydrophobic electrophiles. Involved in the detoxification of certain herbicides. Most active with substrates possessing a chloroacetamide structure. Trans-cinnamic acid and 1-chloro-2,4-dinitrobenzene are not effective substrates. May play an important role in the benoxacor-mediated protection of maize from metolachlor injury. The protein is Glutathione S-transferase 4 (GST4) of Zea mays (Maize).